The following is a 208-amino-acid chain: Fibroblast growth factor 10 (208 aa).

The N-terminal stretch at 1 to 37 (MWKWILTHCASAFPHLPGCCCCCFLLLFLVSSVPVTC) is a signal peptide. Asn-51 and Asn-196 each carry an N-linked (GlcNAc...) asparagine glycan.

This sequence belongs to the heparin-binding growth factors family. In terms of assembly, interacts with FGFR1 and FGFR2. Interacts with FGFBP1.

The protein localises to the secreted. Its function is as follows. Plays an important role in the regulation of embryonic development, cell proliferation and cell differentiation. Required for normal branching morphogenesis. May play a role in wound healing. The sequence is that of Fibroblast growth factor 10 (FGF10) from Homo sapiens (Human).